The chain runs to 89 residues: Small ribosomal subunit protein uS15 (89 aa).

The protein belongs to the universal ribosomal protein uS15 family. As to quaternary structure, part of the 30S ribosomal subunit. Forms a bridge to the 50S subunit in the 70S ribosome, contacting the 23S rRNA.

In terms of biological role, one of the primary rRNA binding proteins, it binds directly to 16S rRNA where it helps nucleate assembly of the platform of the 30S subunit by binding and bridging several RNA helices of the 16S rRNA. Forms an intersubunit bridge (bridge B4) with the 23S rRNA of the 50S subunit in the ribosome. The sequence is that of Small ribosomal subunit protein uS15 from Bartonella tribocorum (strain CIP 105476 / IBS 506).